We begin with the raw amino-acid sequence, 70 residues long: Turripeptide Gsp9.3 (70 aa).

The signal sequence occupies residues 1–20 (MKVYCLLLVLLVGLVSQAHG). Residues 21–70 (QLDKKCQMVCTFDYRPVCGSDGRTYPNKCTLTSTACMSQRSITVFHDGEC) enclose the Kazal-like domain. 3 disulfide bridges follow: Cys26-Cys56, Cys30-Cys49, and Cys38-Cys70.

Belongs to the conopeptide P-like superfamily. As to expression, expressed by the venom duct.

Its subcellular location is the secreted. Its function is as follows. Acts as a neurotoxin by inhibiting an ion channel. May also act as a serine protease inhibitor, since it possess the kazal serine protease inhibitor signature. The chain is Turripeptide Gsp9.3 from Gemmula speciosa (Splendid gem-turris).